The sequence spans 123 residues: Holo-[acyl-carrier-protein] synthase (123 aa).

Residues D8 and E60 each contribute to the Mg(2+) site.

The protein belongs to the P-Pant transferase superfamily. AcpS family. It depends on Mg(2+) as a cofactor.

Its subcellular location is the cytoplasm. It catalyses the reaction apo-[ACP] + CoA = holo-[ACP] + adenosine 3',5'-bisphosphate + H(+). Functionally, transfers the 4'-phosphopantetheine moiety from coenzyme A to a Ser of acyl-carrier-protein. The sequence is that of Holo-[acyl-carrier-protein] synthase from Ehrlichia ruminantium (strain Gardel).